The primary structure comprises 293 residues: Movement protein BC1 (293 aa).

It belongs to the begomovirus movement protein BC1 family. Binds to dimeric supercoiled plasmid DNA. Post-translationally, phosphorylated.

It localises to the host cell membrane. It is found in the host microsome membrane. The protein resides in the host endoplasmic reticulum membrane. Transports viral genome to neighboring plant cells directly through plasmosdesmata, without any budding. The movement protein allows efficient cell to cell propagation, by bypassing the host cell wall barrier. Begomovirus genome is shuttled out of nucleus by Nuclear shuttle protein (NSP) and the movement protein transports the DNA-NSP complex to cell plasmodesmata and facilitates further movement across the cell wall. This chain is Movement protein BC1, found in Cucurbita moschata (Winter crookneck squash).